We begin with the raw amino-acid sequence, 48 residues long: Thiamine thiazole synthase, chloroplastic (48 aa).

2 residues coordinate substrate: alanine 18 and valine 40.

It belongs to the THI4 family. In terms of assembly, homooctamer. Fe cation serves as cofactor.

The protein localises to the plastid. It is found in the chloroplast. The catalysed reaction is [ADP-thiazole synthase]-L-cysteine + glycine + NAD(+) = [ADP-thiazole synthase]-dehydroalanine + ADP-5-ethyl-4-methylthiazole-2-carboxylate + nicotinamide + 3 H2O + 2 H(+). Its function is as follows. Involved in biosynthesis of the thiamine precursor thiazole. Catalyzes the conversion of NAD and glycine to adenosine diphosphate 5-(2-hydroxyethyl)-4-methylthiazole-2-carboxylic acid (ADT), an adenylated thiazole intermediate. The reaction includes an iron-dependent sulfide transfer from a conserved cysteine residue of the protein to a thiazole intermediate. The enzyme can only undergo a single turnover, which suggests it is a suicide enzyme. May have additional roles in adaptation to various stress conditions and in DNA damage tolerance. In Populus euphratica (Euphrates poplar), this protein is Thiamine thiazole synthase, chloroplastic (THI1).